Reading from the N-terminus, the 376-residue chain is MLRTLRTSQLARSGFGTPSFGLRFNSVGRAFVFSQTGEPKDVIQVLEYPIEKPLENQVLLKSLGFTINPADINQLEGVYPSVPPKSVQINNEDAAIGGNEGLFQVLDPGAKSGLKKGDWVLPRKTCFGTWRSHALVEADTVVKIDNTDLTKVQATTVSVNPSTAYEMLKDLKEGDWFIQNGGNSGVGRAAIQIGHIRGLKSISVVRDRPDLEVLKKELTDLGATHVITEEEASDKLFSKQIKSWTGGKIKLALNCIGGKSATSIMRQLGAGGSIVTYGGMSKKPLTFPTGPFIFKDITAKGYWLTRWADKHPEEKAKTIENIFKFYREKKFVAPPVNISTLDFSKGNDVVLSEFLDALGKAQKGGGKKQLVQWVEY.

Residues 1-12 constitute a mitochondrion transit peptide; the sequence is MLRTLRTSQLAR. Residue tyrosine 79 is the Proton donor of the active site. NADP(+)-binding positions include asparagine 160, 183 to 186, 206 to 208, 277 to 280, 302 to 304, and lysine 368; these read NSGV, RDR, YGGM, and YWL.

Belongs to the zinc-containing alcohol dehydrogenase family. Quinone oxidoreductase subfamily. In terms of assembly, homodimer.

The protein localises to the mitochondrion matrix. The enzyme catalyses a 2,3-saturated acyl-[ACP] + NADP(+) = a (2E)-enoyl-[ACP] + NADPH + H(+). Functionally, catalyzes the NADPH-dependent reduction of trans-2-enoyl thioesters in mitochondrial fatty acid synthesis (fatty acid synthesis type II). Fatty acid chain elongation in mitochondria uses acyl carrier protein (ACP) as an acyl group carrier, but the enzyme accepts both ACP and CoA thioesters as substrates in vitro. Required for respiration and the maintenance of the mitochondrial compartment. The protein is Enoyl-[acyl-carrier-protein] reductase, mitochondrial (ETR1) of Yarrowia lipolytica (strain CLIB 122 / E 150) (Yeast).